The following is a 214-amino-acid chain: Cytochrome b (214 aa).

Transmembrane regions (helical) follow at residues 31-51, 75-96, 111-131, and 176-196; these read FGSM…FLAI, WIMQ…YIHI, WLSG…GYVL, and FFAL…IHIL. The heme b site is built by His81 and His95. The heme b site is built by His180 and His194. A ubiquinone is bound at residue His199.

This sequence belongs to the cytochrome b family. In terms of assembly, the cytochrome bc1 complex contains 3 respiratory subunits (MT-CYB, CYC1 and UQCRFS1), 2 core proteins (UQCRC1 and UQCRC2) and probably 6 low-molecular weight proteins. Requires heme b as cofactor.

The protein resides in the mitochondrion inner membrane. In terms of biological role, component of the ubiquinol-cytochrome c reductase complex (complex III or cytochrome b-c1 complex) that is part of the mitochondrial respiratory chain. The b-c1 complex mediates electron transfer from ubiquinol to cytochrome c. Contributes to the generation of a proton gradient across the mitochondrial membrane that is then used for ATP synthesis. The sequence is that of Cytochrome b (MT-CYB) from Agkistrodon contortrix contortrix (Southern copperhead).